We begin with the raw amino-acid sequence, 557 residues long: Formate--tetrahydrofolate ligase 2 (557 aa).

66 to 73 (TPAGEGKT) contacts ATP.

It belongs to the formate--tetrahydrofolate ligase family.

The catalysed reaction is (6S)-5,6,7,8-tetrahydrofolate + formate + ATP = (6R)-10-formyltetrahydrofolate + ADP + phosphate. The protein operates within one-carbon metabolism; tetrahydrofolate interconversion. The sequence is that of Formate--tetrahydrofolate ligase 2 from Streptococcus pyogenes serotype M12 (strain MGAS9429).